Reading from the N-terminus, the 195-residue chain is U8 snoRNA-decapping enzyme (195 aa).

Residues 18–168 (GWRHACHAML…LENTFIGNAR (151 aa)) form the Nudix hydrolase domain. Residues H24, R50, and F57 each coordinate substrate. Mn(2+)-binding residues include G59, E76, E80, and H99. The Nudix box motif lies at 61–82 (FVDLRDGSLEDGLNRELGEELG). Substrate contacts are provided by N166 and Q170. Residue E173 participates in Mn(2+) binding.

The protein belongs to the Nudix hydrolase family. NUDT16 subfamily. In terms of assembly, homodimer. It depends on Mg(2+) as a cofactor. Mn(2+) is required as a cofactor. Requires Co(2+) as cofactor.

The protein resides in the nucleus. It localises to the nucleolus. It is found in the nucleoplasm. The protein localises to the cytoplasm. It catalyses the reaction a 5'-end (N(7)-methyl 5'-triphosphoguanosine)-ribonucleoside in mRNA + H2O = N(7)-methyl-GDP + a 5'-end phospho-ribonucleoside in mRNA + 2 H(+). The catalysed reaction is IDP + H2O = IMP + phosphate + H(+). It carries out the reaction dIDP + H2O = dIMP + phosphate + H(+). The enzyme catalyses a 5'-end NAD(+)-phospho-ribonucleoside in mRNA + H2O = a 5'-end phospho-ribonucleoside in mRNA + NAD(+) + H(+). It catalyses the reaction a 5'-end FAD-phospho-ribonucleoside in mRNA + H2O = a 5'-end phospho-adenosine-phospho-ribonucleoside in mRNA + FMN + 2 H(+). The catalysed reaction is a 5'-end CoA-ribonucleoside in mRNA + H2O = a 5'-end phospho-adenosine-phospho-ribonucleoside in mRNA + (R)-4'-phosphopantetheine + 2 H(+). Its function is as follows. RNA-binding and decapping enzyme that catalyzes the cleavage of the cap structure of snoRNAs and mRNAs in a metal-dependent manner. Part of the U8 snoRNP complex that is required for the accumulation of mature 5.8S and 28S rRNA. Has diphosphatase activity and removes m7G and/or m227G caps from U8 snoRNA and leaves a 5'monophosphate on the RNA. Also catalyzes the cleavage of the cap structure on mRNAs. Does not hydrolyze cap analog structures like 7-methylguanosine nucleoside triphosphate (m7GpppG). Also hydrolysis m7G- and m227G U3-capped RNAs but with less efficiencies. Has broad substrate specificity with manganese or cobalt as cofactor and can act on various RNA species. Binds to the U8 snoRNA; metal is not required for RNA-binding. May play a role in the regulation of snoRNAs and mRNAs degradation. Also acts as a phosphatase; hydrolyzes the non-canonical purine nucleotides inosine diphosphate (IDP) and deoxyinosine diphosphate (dITP) as well as guanosine diphosphate (GDP), deoxyguanosine diphosphate (dGDP), xanthine diphosphate (XDP), inosine triphosphate (ITP) and deoxyinosine triphosphate (ITP) to their respective monophosphate derivatives and does not distinguish between the deoxy- and ribose forms. The order of activity with different substrates is IDP &gt; dIDP &gt;&gt; GDP = dGDP &gt; XDP = ITP = dITP. Binds strongly to GTP, ITP and XTP. Participates in the hydrolysis of dIDP/IDP and probably excludes non-canonical purines from RNA and DNA precursor pools, thus preventing their incorporation into RNA and DNA and avoiding chromosomal lesions. Exhibits decapping activity towards NAD-capped RNAs and FAD-capped RNAs. Exhibits decapping activity towards dpCoA-capped RNAs in vitro. The chain is U8 snoRNA-decapping enzyme (NUDT16) from Ovis aries (Sheep).